The chain runs to 531 residues: Polypyrimidine tract-binding protein 2 (531 aa).

Residue methionine 1 is modified to N-acetylmethionine. 2 positions are modified to phosphoserine: serine 26 and serine 27. RRM domains lie at 59–133 (RVLH…YSNH) and 181–257 (LRII…FSKL). Position 308 is a phosphoserine (serine 308). 2 consecutive RRM domains span residues 338–412 (TVLL…LSKH) and 455–529 (ATLH…FSKS).

In terms of assembly, monomer. Interacts with NOVA1; the interaction is direct. Identified in a mRNP complex, at least composed of DHX9, DDX3X, ELAVL1, HNRNPU, IGF2BP1, ILF3, PABPC1, PCBP2, PTBP2, STAU1, STAU2, SYNCRIP and YBX1. Part of a ternary complex containing KHSRP and HNRPH1. Interacts with NOVA2; the interaction is direct.

It is found in the nucleus. Functionally, RNA-binding protein which binds to intronic polypyrimidine tracts and mediates negative regulation of exons splicing. May antagonize in a tissue-specific manner the ability of NOVA1 to activate exon selection. In addition to its function in pre-mRNA splicing, plays also a role in the regulation of translation. The sequence is that of Polypyrimidine tract-binding protein 2 from Rattus norvegicus (Rat).